Reading from the N-terminus, the 830-residue chain is Periplasmic nitrate reductase (830 aa).

Residues 1–32 (MELNRRDFMKANAAVAAAAAAGITIPVKNVHA) constitute a signal peptide (tat-type signal). Residues 39-95 (IRWDKAPCRYCGTGCSVLVGTKDGRVVATQGDPDAEVNRGLNCIKGYFLSKIMYGAD) form the 4Fe-4S Mo/W bis-MGD-type domain. 4 residues coordinate [4Fe-4S] cluster: cysteine 46, cysteine 49, cysteine 53, and cysteine 81. Mo-bis(molybdopterin guanine dinucleotide) is bound by residues lysine 83, glutamine 151, asparagine 176, cysteine 180, 213 to 220 (WGSNMAEM), 244 to 248 (STFEH), methionine 374, glutamine 378, asparagine 484, 510 to 511 (SD), lysine 533, aspartate 560, and 720 to 729 (TGRVLEHWHT). Phenylalanine 796 contacts substrate. Mo-bis(molybdopterin guanine dinucleotide) contacts are provided by asparagine 804 and lysine 821.

It belongs to the prokaryotic molybdopterin-containing oxidoreductase family. NasA/NapA/NarB subfamily. Component of the periplasmic nitrate reductase NapAB complex composed of NapA and NapB. Requires [4Fe-4S] cluster as cofactor. The cofactor is Mo-bis(molybdopterin guanine dinucleotide). In terms of processing, predicted to be exported by the Tat system. The position of the signal peptide cleavage has not been experimentally proven.

The protein resides in the periplasm. The enzyme catalyses 2 Fe(II)-[cytochrome] + nitrate + 2 H(+) = 2 Fe(III)-[cytochrome] + nitrite + H2O. Catalytic subunit of the periplasmic nitrate reductase complex NapAB. Receives electrons from NapB and catalyzes the reduction of nitrate to nitrite. This is Periplasmic nitrate reductase from Mannheimia succiniciproducens (strain KCTC 0769BP / MBEL55E).